A 178-amino-acid chain; its full sequence is Large ribosomal subunit protein uL6 (178 aa).

Belongs to the universal ribosomal protein uL6 family. Part of the 50S ribosomal subunit.

In terms of biological role, this protein binds to the 23S rRNA, and is important in its secondary structure. It is located near the subunit interface in the base of the L7/L12 stalk, and near the tRNA binding site of the peptidyltransferase center. This chain is Large ribosomal subunit protein uL6, found in Streptococcus agalactiae serotype V (strain ATCC BAA-611 / 2603 V/R).